The chain runs to 817 residues: TPR repeat-containing protein C19B12.01 (817 aa).

Disordered stretches follow at residues 276 to 298 (DQKSLAPSEELDPILSSEDPNHP) and 386 to 413 (GKSPEGVDKPENDEGLGSFLPKPQDGEN). TPR repeat units lie at residues 459–492 (LQMWDCVVMCHCSLNRQDLAVQVIKRELENDPYD), 521–554 (APAQRSLGKYYYKKGDLLQAMNCFNESLKINPLS), 555–588 (YPTWFTYGCAALELQKYDAAMEAFSRCLSINPED), and 625–658 (WRIWENYMLISVDVNKWSEVIRALRRIIEIKGKD).

The chain is TPR repeat-containing protein C19B12.01 from Schizosaccharomyces pombe (strain 972 / ATCC 24843) (Fission yeast).